The following is an 810-amino-acid chain: Lon protease (810 aa).

In terms of domain architecture, Lon N-terminal spans 16–209 (YPVPPLRDIV…RVYAFMEGEI (194 aa)). An ATP-binding site is contributed by 361–368 (GPPGVGKT). The region spanning 598–779 (EDLVGVTTGL…DDVLKHALVR (182 aa)) is the Lon proteolytic domain. Residues Ser685 and Lys728 contribute to the active site.

Belongs to the peptidase S16 family. Homohexamer. Organized in a ring with a central cavity.

The protein localises to the cytoplasm. The catalysed reaction is Hydrolysis of proteins in presence of ATP.. Its function is as follows. ATP-dependent serine protease that mediates the selective degradation of mutant and abnormal proteins as well as certain short-lived regulatory proteins. Required for cellular homeostasis and for survival from DNA damage and developmental changes induced by stress. Degrades polypeptides processively to yield small peptide fragments that are 5 to 10 amino acids long. Binds to DNA in a double-stranded, site-specific manner. Involved in iron uptake. This is Lon protease from Azospirillum brasilense.